The sequence spans 300 residues: Free fatty acid receptor 1 (300 aa).

The Extracellular portion of the chain corresponds to 1-8; sequence MDLPPQLS. A helical transmembrane segment spans residues 9-31; the sequence is FALYVAAFALGFPLNVLAIRGAR. The Cytoplasmic segment spans residues 32–41; the sequence is AHARRRLTPS. A helical transmembrane segment spans residues 42 to 64; sequence LVYALNLGCSDLLLTVSLPLKAV. At 65–79 the chain is on the extracellular side; that stretch reads EALASGAWPLPASLC. A disulfide bond links Cys-79 and Cys-170. The helical transmembrane segment at 80–101 threads the bilayer; the sequence is PVFGVAHFAPLYAGGGFLAALS. Topologically, residues 102–121 are cytoplasmic; that stretch reads AGRYLGAAFPLGYQAFRRPC. A helical transmembrane segment spans residues 122–142; the sequence is YSWGVCAAIWALVLCHLGLVF. Residues 143 to 178 lie on the Extracellular side of the membrane; the sequence is VLEAPGGWLDHSNTSLGINTPVNGSPVCLEAWDPAS. An N-linked (GlcNAc...) asparagine glycan is attached at Asn-155. The helical transmembrane segment at 179-200 threads the bilayer; the sequence is AGPARFSLSLLLFFLPLAITAF. Topologically, residues 201–223 are cytoplasmic; that stretch reads CYVGCLRALAHSGLTHRRKLRAA. Residues 224–248 form a helical membrane-spanning segment; that stretch reads WVAGGALLTLLLCVGPYNASNVASF. Topologically, residues 249–256 are extracellular; that stretch reads LNPNLGGS. Residues 257-279 form a helical membrane-spanning segment; that stretch reads WRKLGLITGAWSVVLNPLVTGYL. Residues 280–300 are Cytoplasmic-facing; sequence GRGPGLKTVCAARTQGSTSQK.

The protein belongs to the G-protein coupled receptor 1 family.

Its subcellular location is the cell membrane. Its function is as follows. G-protein coupled receptor for medium and long chain saturated and unsaturated fatty acids that plays an important role in glucose homeostasis. Fatty acid binding increases glucose-stimulated insulin secretion, and may also enhance the secretion of glucagon-like peptide 1 (GLP-1). May also play a role in bone homeostasis; receptor signaling activates pathways that inhibit osteoclast differentiation. Ligand binding leads to a conformation change that triggers signaling via G-proteins that activate phospholipase C, leading to an increase of the intracellular calcium concentration. Seems to act through a G(q) and G(i)-mediated pathway. Mediates the anti-inflammatory effects of omega-3 polyunsaturated fatty acids (PUFAs) via inhibition of NLRP3 inflammasome activation. In Macaca fascicularis (Crab-eating macaque), this protein is Free fatty acid receptor 1 (FFAR1).